A 414-amino-acid polypeptide reads, in one-letter code: MVDNIIDTDNYYAIVYTYKTIGLSKLYEHYIPEKDLINIRFSDTQVSLLQTCNRVELYLYTKDRNKINDILSKLNETHGKDISSNAIVLRGKDAINHLYQVASGLDSLAIGEYEILGQIKEALTSCKKHSLCNEEIELLFNAAIKVGRKVRSLTNISKGKVGIYSIAIQKSLEVMGDLTDIKIAIVGAGEIGSKLAFMLKNNGARNLTIFNRNLDRALELSNKFGYNAELLDFQKVNEYDLVFIAINNSNPSQLRLDKPKLVIDLSVPPVVYKTSNVIYLDDLRVISDNIILNKREDIKKAEAIINEEIQKFESLLNNYNMNRLVSRFMSEIEWVREKEVDRAFNEILKNYADKDNIKEIIDKMTYSLIKKVFSPILEDLRKDPNNKKQIVEYLIEVFQNGQFSDTKTQKIEKQ.

Substrate is bound by residues 51–54, serine 107, 112–114, and glutamine 118; these read TCNR and EYE. Cysteine 52 acts as the Nucleophile in catalysis. Position 187 to 192 (187 to 192) interacts with NADP(+); the sequence is GAGEIG.

This sequence belongs to the glutamyl-tRNA reductase family. Homodimer.

It catalyses the reaction (S)-4-amino-5-oxopentanoate + tRNA(Glu) + NADP(+) = L-glutamyl-tRNA(Glu) + NADPH + H(+). It participates in porphyrin-containing compound metabolism; protoporphyrin-IX biosynthesis; 5-aminolevulinate from L-glutamyl-tRNA(Glu): step 1/2. Functionally, catalyzes the NADPH-dependent reduction of glutamyl-tRNA(Glu) to glutamate 1-semialdehyde (GSA). This is Glutamyl-tRNA reductase from Sulfolobus acidocaldarius (strain ATCC 33909 / DSM 639 / JCM 8929 / NBRC 15157 / NCIMB 11770).